A 98-amino-acid polypeptide reads, in one-letter code: MALTKADLAETLFEKVGLSKRDAKETVEVFFEEIKQALESGEQVKLSGFGNFDLREKSERPGRNPKTGEDIPISARRVVTFKPGQKLKARVENLPVEK.

Over residues 53-69 the composition is skewed to basic and acidic residues; the sequence is DLREKSERPGRNPKTGE. Positions 53–73 are disordered; the sequence is DLREKSERPGRNPKTGEDIPI.

It belongs to the bacterial histone-like protein family. As to quaternary structure, heterodimer of an alpha and a beta chain.

In terms of biological role, this protein is one of the two subunits of integration host factor, a specific DNA-binding protein that functions in genetic recombination as well as in transcriptional and translational control. In Aliivibrio fischeri (strain ATCC 700601 / ES114) (Vibrio fischeri), this protein is Integration host factor subunit alpha.